The primary structure comprises 386 residues: Patatin group M-1 (386 aa).

Positions 1–23 (MATTKSFLILFFMILATTSSTCA) are cleaved as a signal peptide. Residues 32-229 (LSIDGGGIKG…TVGDPALLSL (198 aa)) enclose the PNPLA domain. A GXGXXG motif is present at residues 36–41 (GGGIKG). The short motif at 75–79 (GTSTG) is the GXSXG element. Ser77 acts as the Nucleophile in catalysis. Asn115 carries N-linked (GlcNAc...) asparagine glycosylation. Residue Asp215 is the Proton acceptor of the active site. Residues 215-217 (DGG) carry the DGA/G motif.

The protein belongs to the patatin family. Tuber.

The protein resides in the vacuole. Functionally, probable lipolytic acyl hydrolase (LAH), an activity which is thought to be involved in the response of tubers to pathogens. In Solanum tuberosum (Potato), this protein is Patatin group M-1.